Consider the following 2195-residue polypeptide: Integrator complex subunit 1 (2195 aa).

The tract at residues M1–L86 is disordered. S13 bears the Phosphoserine mark. Positions G34 to L45 are enriched in polar residues. K47 is subject to N6-acetyllysine. Low complexity predominate over residues S62–T75. T83 is modified (phosphothreonine). Position 87 is a phosphoserine (S87). The segment at L267–T297 is disordered. Phosphoserine is present on residues S307 and S926. The tract at residues S923–Q947 is disordered. The chain crosses the membrane as a helical span at residues H1165 to D1185. Residues S1313 to V1347 form a disordered region. The segment covering P1316–K1325 has biased composition (basic and acidic residues). Phosphoserine is present on residues S1320, S1328, and S1329.

Belongs to the Integrator subunit 1 family. As to quaternary structure, component of the Integrator complex, composed of core subunits INTS1, INTS2, INTS3, INTS4, INTS5, INTS6, INTS7, INTS8, INTS9/RC74, INTS10, INTS11/CPSF3L, INTS12, INTS13, INTS14 and INTS15. The core complex associates with protein phosphatase 2A subunits PPP2CA and PPP2R1A, to form the Integrator-PP2A (INTAC) complex. Interacts with ESRRB, ESRRB is not a core component of the Integrator complex and this association is a bridge for the interaction with the multiprotein complex Integrator; attracts the transcriptional machinery.

It localises to the nucleus. It is found in the nucleus membrane. Its function is as follows. Component of the integrator complex, a multiprotein complex that terminates RNA polymerase II (Pol II) transcription in the promoter-proximal region of genes. The integrator complex provides a quality checkpoint during transcription elongation by driving premature transcription termination of transcripts that are unfavorably configured for transcriptional elongation: the complex terminates transcription by (1) catalyzing dephosphorylation of the C-terminal domain (CTD) of Pol II subunit POLR2A/RPB1 and SUPT5H/SPT5, (2) degrading the exiting nascent RNA transcript via endonuclease activity and (3) promoting the release of Pol II from bound DNA. The integrator complex is also involved in terminating the synthesis of non-coding Pol II transcripts, such as enhancer RNAs (eRNAs), small nuclear RNAs (snRNAs), telomerase RNAs and long non-coding RNAs (lncRNAs). Within the integrator complex, INTS1 is involved in the post-termination step: INTS1 displaces INTS3 and the SOSS factors, allowing the integrator complex to return to the closed conformation, ready to bind to the paused elongation complex for another termination cycle. Mediates recruitment of cytoplasmic dynein to the nuclear envelope, probably as component of the integrator complex. The protein is Integrator complex subunit 1 of Mus musculus (Mouse).